Here is a 494-residue protein sequence, read N- to C-terminus: Glycerol kinase (494 aa).

Threonine 13 is an ADP binding site. Positions 13, 14, and 15 each coordinate ATP. Threonine 13 contacts sn-glycerol 3-phosphate. Arginine 17 serves as a coordination point for ADP. Residues arginine 83, glutamate 84, tyrosine 135, and aspartate 244 each coordinate sn-glycerol 3-phosphate. Positions 83, 84, 135, 244, and 245 each coordinate glycerol. ADP-binding residues include threonine 266 and glycine 309. The ATP site is built by threonine 266, glycine 309, glutamine 313, and glycine 410. ADP is bound by residues glycine 410 and asparagine 414.

Belongs to the FGGY kinase family.

The enzyme catalyses glycerol + ATP = sn-glycerol 3-phosphate + ADP + H(+). It functions in the pathway polyol metabolism; glycerol degradation via glycerol kinase pathway; sn-glycerol 3-phosphate from glycerol: step 1/1. Its activity is regulated as follows. Inhibited by fructose 1,6-bisphosphate (FBP). In terms of biological role, key enzyme in the regulation of glycerol uptake and metabolism. Catalyzes the phosphorylation of glycerol to yield sn-glycerol 3-phosphate. This Shewanella baltica (strain OS185) protein is Glycerol kinase.